We begin with the raw amino-acid sequence, 98 residues long: Small ribosomal subunit protein bS20 (98 aa).

The disordered stretch occupies residues 76 to 98; it reads HPNNGARKKSRLASKLKPIEQTA.

The protein belongs to the bacterial ribosomal protein bS20 family.

Functionally, binds directly to 16S ribosomal RNA. The chain is Small ribosomal subunit protein bS20 from Trichormus variabilis (strain ATCC 29413 / PCC 7937) (Anabaena variabilis).